Consider the following 309-residue polypeptide: MELQFLGTGAGQPAKHRNVSSLVLKLLDEINEVWMFDCGEGTQRQILETTIKPRKIKKIFITHLHGDHIFGLPGFLSSRAFQASEEQTDLEIYGPVGIKSYVTNSIRISGSKLPYQIHYHEFDDTSMGKILETDKFIVYAERLAHTIFCMGYRVVQKDLEGTLDAEALRAVGVPFGPLFGKVKNGQDIELEDGTKIFAKDFISEPRKGKIITIIGDTRKTSASVRLAKDADVLVHESTYGKGDERMARNHGHSTNMQAAQIARDAGAKRLLLNHVSARFLGRDCRQMEKDAATIFENVKVVRDLEEVII.

H63, H65, D67, H68, H145, D216, and H274 together coordinate Zn(2+). The active-site Proton acceptor is D67.

The protein belongs to the RNase Z family. As to quaternary structure, homodimer. The cofactor is Zn(2+).

It catalyses the reaction Endonucleolytic cleavage of RNA, removing extra 3' nucleotides from tRNA precursor, generating 3' termini of tRNAs. A 3'-hydroxy group is left at the tRNA terminus and a 5'-phosphoryl group is left at the trailer molecule.. Zinc phosphodiesterase, which displays some tRNA 3'-processing endonuclease activity. Probably involved in tRNA maturation, by removing a 3'-trailer from precursor tRNA. In Streptococcus equi subsp. equi (strain 4047), this protein is Ribonuclease Z.